A 784-amino-acid chain; its full sequence is Rabenosyn-5 (784 aa).

Alanine 2 bears the N-acetylalanine mark. Serine 3 is modified (phosphoserine). A C2H2-type zinc finger spans residues 14 to 37 (FLCPLCLKDLQSFYQLHSHYEEEH). A necessary for the correct targeting to endosomes region spans residues 100–263 (RSHLSDFKKH…HCKDTLLKRE (164 aa)). Residues 157-260 (DQDVPFCPDC…CCTHCKDTLL (104 aa)) form an FYVE-type zinc finger. Cysteine 163, cysteine 166, cysteine 179, cysteine 182, cysteine 187, and cysteine 190 together coordinate Zn(2+). The span at 207–224 (KESLSTHTSPSQSPNSVH) shows a compositional bias: polar residues. Residues 207 to 241 (KESLSTHTSPSQSPNSVHGSRRGSISSMSSVSSVL) are disordered. Serine 215, serine 219, serine 226, and serine 230 each carry phosphoserine. The span at 228–240 (RGSISSMSSVSSV) shows a compositional bias: low complexity. 2 residues coordinate Zn(2+): cysteine 252 and cysteine 255. The interval 264–500 (QQIDEKEHTP…QLQDEYDQQQ (237 aa)) is necessary for interaction with RAB4A. The segment at 264 to 784 (QQIDEKEHTP…TLAKQKGGTD (521 aa)) is necessary for interaction with EHD1. Coiled-coil stretches lie at residues 378 to 414 (TKEQ…LEER) and 472 to 531 (QAKA…RELE). A compositionally biased stretch (basic and acidic residues) spans 390–400 (KEEMERKRAVE). The segment at 390 to 429 (KEEMERKRAVERQAALESQRRLEERQSGLASRAANGEVAS) is disordered. A UIM domain is found at 496–515 (YDQQQTEKAIELSRRQAEEE). Positions 574–732 (DLGSSPVPSS…DSDSGPEAEE (159 aa)) are disordered. The segment covering 579–598 (PVPSSTAPKTPSLSSTQPTR) has biased composition (polar residues). Residues 627–784 (PFDEEDLSSP…TLAKQKGGTD (158 aa)) form a necessary for interaction with RAB5A region. Acidic residues predominate over residues 663–673 (PFEEEDEEEEA). Serine 684 is subject to Phosphoserine. A compositionally biased stretch (acidic residues) spans 722 to 732 (MDSDSGPEAEE).

Interacts with EHD1, RAB4A, RAB5A, RAB14, RAB22A, RAB24 and VPS45. Binds simultaneously to RAB4A and RAB5A in vitro. Interacts with RAB4A and RAB5A that has been activated by GTP binding.

Its subcellular location is the cell membrane. It localises to the early endosome membrane. Its function is as follows. Rab4/Rab5 effector protein acting in early endocytic membrane fusion and membrane trafficking of recycling endosomes. Required for endosome fusion either homotypically or with clathrin coated vesicles. Plays a role in the lysosomal trafficking of CTSD/cathepsin D from the Golgi to lysosomes. Also promotes the recycling of transferrin directly from early endosomes to the plasma membrane. Binds phospholipid vesicles containing phosphatidylinositol 3-phosphate (PtdInsP3). Plays a role in the recycling of transferrin receptor to the plasma membrane. This Homo sapiens (Human) protein is Rabenosyn-5.